Reading from the N-terminus, the 589-residue chain is Type I restriction enzyme EcoAI specificity subunit (589 aa).

The protein belongs to the type-I restriction system S methylase family. As to quaternary structure, the type I restriction/modification system is composed of three polypeptides R, M and S. The restriction enzyme has stoichiometry R(2)M(2)S(1) while the methyltransferase is M(2)S(1).

Functionally, the specificity (S) subunit of a type I restriction enzyme; this subunit dictates DNA sequence specificity. The M and S subunits together form a methyltransferase (MTase) that methylates A-2 on the top strand and A-3 on the bottom strand of the sequence 5'-GAGN(7)GTCA-3'. In the presence of the R subunit the complex can also act as an endonuclease, binding to the same target sequence but cutting the DNA some distance from this site. Whether the DNA is cut or modified depends on the methylation state of the target sequence. When the target site is unmodified, the DNA is cut. When the target site is hemimethylated, the complex acts as a maintenance MTase modifying the DNA so that both strands become methylated. After locating a non-methylated recognition site, the enzyme complex serves as a molecular motor that translocates DNA in an ATP-dependent manner until a collision occurs that triggers cleavage. The protein is Type I restriction enzyme EcoAI specificity subunit of Escherichia coli.